Reading from the N-terminus, the 490-residue chain is uncharacterized protein (490 aa).

The N-terminal stretch at 1 to 19 is a signal peptide; that stretch reads MSITSVSLYVYLICAGGHA.

This sequence belongs to the mimivirus L137 family.

This is an uncharacterized protein from Acanthamoeba polyphaga (Amoeba).